The chain runs to 502 residues: CBL-interacting protein kinase 11 (502 aa).

In terms of domain architecture, Protein kinase spans 12–267; it reads YEVGKQLGQG…IPRIKRSTWY (256 aa). ATP contacts are provided by residues 18–26 and Lys41; that span reads LGQGTFAKV. The Proton acceptor role is filled by Asp135. The tract at residues 153 to 182 is activation loop; it reads DFGLSALAESKRQDGLLHTTCGTPAYVAPE. The NAF domain occupies 297-333; the sequence is AECSTSEENQGSLSLPNLNAFDIISLSTGFNLSGFFE. Positions 339-367 are PPI; sequence QEERFTTRQPVTTVLGKLKELAKRLKLKV. The tract at residues 447–502 is disordered; it reads LQGEQQQSPLPPELPQDQLQPSLPQQEKQDMPEPPLLPQVPQEEVQTSIPAEQTKN. The span at 461–472 shows a compositional bias: low complexity; it reads PQDQLQPSLPQQ. The span at 493 to 502 shows a compositional bias: polar residues; sequence TSIPAEQTKN.

The protein belongs to the protein kinase superfamily. CAMK Ser/Thr protein kinase family. SNF1 subfamily. Requires Mn(2+) as cofactor.

The enzyme catalyses L-seryl-[protein] + ATP = O-phospho-L-seryl-[protein] + ADP + H(+). It catalyses the reaction L-threonyl-[protein] + ATP = O-phospho-L-threonyl-[protein] + ADP + H(+). Its function is as follows. CIPK serine-threonine protein kinases interact with CBL proteins. Binding of a CBL protein to the regulatory NAF domain of CIPK protein lead to the activation of the kinase in a calcium-dependent manner. This chain is CBL-interacting protein kinase 11 (CIPK11), found in Oryza sativa subsp. japonica (Rice).